Reading from the N-terminus, the 708-residue chain is Leucine-rich repeat neuronal protein 3 (708 aa).

Positions 1 to 22 are cleaved as a signal peptide; the sequence is MKDMPLRIHVLLGLAITTLVQA. Positions 23-69 constitute an LRRNT domain; it reads VDKKVDCPRLCTCEIRPWFTPRSIYMEASTVDCNDLGLLTFPARLPA. Over 23-628 the chain is Extracellular; the sequence is VDKKVDCPRL…KEYEKNNTTT (606 aa). LRR repeat units follow at residues 70–91, 93–114, 117–138, 141–162, 165–186, 189–210, 213–234, 237–258, 261–282, 285–304, 310–332, and 335–358; these read NTQI…TDFP, NLTG…NVKK, QLLS…CLSE, NLQE…AFIG, NLLR…WFDA, NLEI…NFKP, NLRS…ALVG, NLES…ALQK, NLKF…DFSN, HLKE…DSLA, DLRK…AFFR, and KLES…ESLP. N-linked (GlcNAc...) asparagine glycosylation is found at N93 and N103. N-linked (GlcNAc...) asparagine glycosylation is present at N223. One can recognise an LRRCT domain in the interval 368 to 421; that stretch reads NPIRCDCVIRWMNMNKTNIRFMEPDSLFCVDPPEFQGQNVRQVHFRDMMEICLP. N-linked (GlcNAc...) asparagine glycosylation is present at N382. The region spanning 421-514 is the Ig-like C2-type domain; sequence PLIAPESFPS…DLKSVMIKVD (94 aa). Residues C444 and C496 are joined by a disulfide bond. N522, N579, N608, N624, and N625 each carry an N-linked (GlcNAc...) asparagine glycan. One can recognise a Fibronectin type-III domain in the interval 523-617; it reads GSLNIKIRDI…NVTTKGLHPD (95 aa). Residues 629-649 traverse the membrane as a helical segment; that stretch reads LMACLGGLLGIIGVICLISCL. The Cytoplasmic segment spans residues 650–708; that stretch reads SPEMNCDGGHSYVRNYLQKPTFALGELYPPLINLWEAGKEKSTSLKVKATVIGLPTNMS.

The protein localises to the membrane. The sequence is that of Leucine-rich repeat neuronal protein 3 (LRRN3) from Homo sapiens (Human).